A 273-amino-acid polypeptide reads, in one-letter code: Cilia- and flagella-associated protein 298-B (273 aa).

It belongs to the CFAP298 family.

The protein localises to the cytoplasm. The protein resides in the cytoskeleton. It is found in the cilium basal body. Plays a role in motile cilium function, possibly by acting on outer dynein arm assembly. Seems to be important for initiation rather than maintenance of cilium motility. Required for correct positioning of the cilium at the apical cell surface, suggesting an additional role in the planar cell polarity (PCP) pathway. May suppress canonical Wnt signaling activity. The polypeptide is Cilia- and flagella-associated protein 298-B (cfap298-b) (Xenopus laevis (African clawed frog)).